Reading from the N-terminus, the 150-residue chain is Large ribosomal subunit protein uL15 (150 aa).

It belongs to the universal ribosomal protein uL15 family. As to quaternary structure, part of the 50S ribosomal subunit.

Functionally, binds to the 23S rRNA. The chain is Large ribosomal subunit protein uL15 from Anaplasma marginale (strain Florida).